A 538-amino-acid polypeptide reads, in one-letter code: Putative cysteine ligase BshC (538 aa).

Positions 421 to 485 (VEEKFQEAKK…LERRHEVELN (65 aa)) form a coiled coil.

This sequence belongs to the BshC family.

Involved in bacillithiol (BSH) biosynthesis. May catalyze the last step of the pathway, the addition of cysteine to glucosamine malate (GlcN-Mal) to generate BSH. The protein is Putative cysteine ligase BshC of Bacillus cytotoxicus (strain DSM 22905 / CIP 110041 / 391-98 / NVH 391-98).